A 528-amino-acid chain; its full sequence is 4-chlorobenzoate--CoA ligase (528 aa).

Residues 161-169, 300-305, and Asn-409 each bind ATP; these read TSGTTGLPK and NIYGTT.

This sequence belongs to the ATP-dependent AMP-binding enzyme family. Homodimer. Mg(2+) serves as cofactor.

The catalysed reaction is 4-chlorobenzoate + ATP + CoA = 4-chlorobenzoyl-CoA + AMP + diphosphate. The protein operates within xenobiotic degradation; 4-chlorobenzoate degradation; 4-hydroxybenzoate from 4-chlorobenzoate: step 2/3. Unaffected by 5,5'-dithiobis-(2-nitrobenzoic acid), 4-chloromercuribenzoate and sodium azide. Inhibited by Cu(2+), Fe(2+) and Zn(2+). Unaffected by Na(+), K(+) and Li(+). In terms of biological role, catalyzes the formation of chlorobenzoyl-CoA via a 2 step reaction. First 4-chlorobenzoyl is adenylated by ATP, followed by acyl transfer from the 4-chlorobenzoyl-AMP intermediate to CoA. Benzoate, 4-bromobenzoate, 4-iodobenzoate and 4-methylbenzoate also act as substrates. Inactive towards 4-aminobenzoate, 4-hydroxybenzoate, 2-aminobenzoate, 2,3-dihydroxybenzoate, 4-coumarate and the aliphatic carboxylic acids palmate, caproate, laurate and butyrate. Negligible activity is detected when ATP is replaced by UTP, CTP or GTP as cosubstrate. The chain is 4-chlorobenzoate--CoA ligase from Pseudomonas sp. (strain CBS-3).